Reading from the N-terminus, the 217-residue chain is Tegument protein BKRF4 (217 aa).

The interval 1–217 (MAMFLKSRGV…GNNNYNWPWL (217 aa)) is disordered. A compositionally biased stretch (polar residues) spans 32-42 (YTLGSQASQSI). Positions 43–79 (QEEDVSDTDESDYSDEDEEIDLEEEYPSDEDPSEGSD) are enriched in acidic residues. The tract at residues 63–64 (DL) is interaction with host histones H3/H4. The segment at 81-84 (DPSW) is interaction with host H2A/H2B. Positions 89–102 (SDESDYSESDEDEA) are enriched in acidic residues. Positions 106–132 (SQASRSSRVSPSTQQSSGLTPTPSFSR) are enriched in low complexity. Pro residues predominate over residues 136 to 145 (RAPPRPPAPA). Polar residues predominate over residues 208–217 (GNNNYNWPWL).

This sequence belongs to the lymphocryptovirus BKRF4 family. Forms a complex with the host H3/H4 dimer and histone chaperone ASF1. Also forms a complex with host H2A/H2B dimer. Interacts (via C-terminus) with BGLF2; this interaction is important for infectious virion production.

It is found in the virion tegument. Its subcellular location is the host nucleus. It localises to the host cytoplasm. The protein localises to the host perinuclear region. Its function is as follows. Histone-binding protein that binds to histones H2A/H2B, H3/H4 and cellular chromatin to overcome the host DNA damage response triggered by the viral genome ends. Interferes with histone ubiquitination and recruitment of repair proteins. This chain is Tegument protein BKRF4, found in Epstein-Barr virus (strain AG876) (HHV-4).